We begin with the raw amino-acid sequence, 178 residues long: Cytochrome b6-f complex iron-sulfur subunit (178 aa).

A helical transmembrane segment spans residues 20-42 (LLTFGTATGVALGALYPVANYFM). The region spanning 71 to 161 (NHPAGDRSLV…IDVEDDKVFV (91 aa)) is the Rieske domain. Positions 107, 109, 125, and 128 each coordinate [2Fe-2S] cluster. An intrachain disulfide couples Cys112 to Cys127.

The protein belongs to the Rieske iron-sulfur protein family. As to quaternary structure, the 4 large subunits of the cytochrome b6-f complex are cytochrome b6, subunit IV (17 kDa polypeptide, PetD), cytochrome f and the Rieske protein, while the 4 small subunits are PetG, PetL, PetM and PetN. The complex functions as a dimer. Requires [2Fe-2S] cluster as cofactor.

Its subcellular location is the cellular thylakoid membrane. The enzyme catalyses 2 oxidized [plastocyanin] + a plastoquinol + 2 H(+)(in) = 2 reduced [plastocyanin] + a plastoquinone + 4 H(+)(out). In terms of biological role, component of the cytochrome b6-f complex, which mediates electron transfer between photosystem II (PSII) and photosystem I (PSI), cyclic electron flow around PSI, and state transitions. In Prochlorococcus marinus (strain MIT 9211), this protein is Cytochrome b6-f complex iron-sulfur subunit.